Here is a 487-residue protein sequence, read N- to C-terminus: V-type proton ATPase subunit B2 (487 aa).

G2 is subject to N-acetylglycine.

It belongs to the ATPase alpha/beta chains family. In terms of assembly, V-ATPase is a heteromultimeric enzyme composed of a peripheral catalytic V1 complex (components A to H) attached to an integral membrane V0 proton pore complex (components: a, c, c'', d and e).

Its subcellular location is the vacuole membrane. Functionally, non-catalytic subunit of the peripheral V1 complex of vacuolar ATPase. V-ATPase is responsible for acidifying a variety of intracellular compartments in eukaryotic cells. This Arabidopsis thaliana (Mouse-ear cress) protein is V-type proton ATPase subunit B2 (VHA-B2).